A 221-amino-acid chain; its full sequence is uncharacterized protein (221 aa).

A run of 4 helical transmembrane segments spans residues 41-63 (TGNI…HSLI), 78-100 (AVMY…SSLS), 141-163 (ILAY…ISFL), and 178-200 (LILR…VNLF).

It localises to the cell membrane. This is an uncharacterized protein from Archaeoglobus fulgidus (strain ATCC 49558 / DSM 4304 / JCM 9628 / NBRC 100126 / VC-16).